Here is a 269-residue protein sequence, read N- to C-terminus: Monofunctional glycosyltransferase (269 aa).

A helical membrane pass occupies residues 46–66 (AIITILILLIIFFGVMYFISS).

The protein belongs to the glycosyltransferase 51 family.

The protein localises to the cell membrane. The enzyme catalyses [GlcNAc-(1-&gt;4)-Mur2Ac(oyl-L-Ala-gamma-D-Glu-L-Lys-D-Ala-D-Ala)](n)-di-trans,octa-cis-undecaprenyl diphosphate + beta-D-GlcNAc-(1-&gt;4)-Mur2Ac(oyl-L-Ala-gamma-D-Glu-L-Lys-D-Ala-D-Ala)-di-trans,octa-cis-undecaprenyl diphosphate = [GlcNAc-(1-&gt;4)-Mur2Ac(oyl-L-Ala-gamma-D-Glu-L-Lys-D-Ala-D-Ala)](n+1)-di-trans,octa-cis-undecaprenyl diphosphate + di-trans,octa-cis-undecaprenyl diphosphate + H(+). It functions in the pathway cell wall biogenesis; peptidoglycan biosynthesis. Peptidoglycan polymerase that catalyzes glycan chain elongation using lipid-linked disaccharide-pentapeptide as the substrate. This chain is Monofunctional glycosyltransferase, found in Staphylococcus epidermidis (strain ATCC 35984 / DSM 28319 / BCRC 17069 / CCUG 31568 / BM 3577 / RP62A).